Reading from the N-terminus, the 224-residue chain is Na(+)-translocating NADH-quinone reductase subunit D (224 aa).

A run of 5 helical transmembrane segments spans residues 43–63, 67–87, 104–124, 132–152, and 179–199; these read TVMA…ISMI, IPSS…VIVV, VFVG…AFAM, FFDG…LGFV, and NGLL…IWAL.

It belongs to the NqrDE/RnfAE family. As to quaternary structure, composed of six subunits; NqrA, NqrB, NqrC, NqrD, NqrE and NqrF.

Its subcellular location is the cell inner membrane. The catalysed reaction is a ubiquinone + n Na(+)(in) + NADH + H(+) = a ubiquinol + n Na(+)(out) + NAD(+). Its function is as follows. NQR complex catalyzes the reduction of ubiquinone-1 to ubiquinol by two successive reactions, coupled with the transport of Na(+) ions from the cytoplasm to the periplasm. NqrA to NqrE are probably involved in the second step, the conversion of ubisemiquinone to ubiquinol. This chain is Na(+)-translocating NADH-quinone reductase subunit D, found in Pseudomonas aeruginosa (strain LESB58).